A 237-amino-acid polypeptide reads, in one-letter code: Ubiquinone biosynthesis O-methyltransferase (237 aa).

S-adenosyl-L-methionine-binding residues include Arg39, Gly59, Asp80, and Met124.

This sequence belongs to the methyltransferase superfamily. UbiG/COQ3 family.

It catalyses the reaction a 3-demethylubiquinol + S-adenosyl-L-methionine = a ubiquinol + S-adenosyl-L-homocysteine + H(+). The catalysed reaction is a 3-(all-trans-polyprenyl)benzene-1,2-diol + S-adenosyl-L-methionine = a 2-methoxy-6-(all-trans-polyprenyl)phenol + S-adenosyl-L-homocysteine + H(+). The protein operates within cofactor biosynthesis; ubiquinone biosynthesis. Functionally, O-methyltransferase that catalyzes the 2 O-methylation steps in the ubiquinone biosynthetic pathway. This chain is Ubiquinone biosynthesis O-methyltransferase, found in Vibrio atlanticus (strain LGP32) (Vibrio splendidus (strain Mel32)).